The primary structure comprises 464 residues: tRNA-2-methylthio-N(6)-dimethylallyladenosine synthase (464 aa).

Residues 1–24 form a disordered region; sequence MSDLVPLSRKPAPAAGGPAPSPAA. A compositionally biased stretch (low complexity) spans 8-18; the sequence is SRKPAPAAGGP. The MTTase N-terminal domain maps to 27 to 142; that stretch reads RKVYVHTFGC…LPEMVERARD (116 aa). Residues Cys-36, Cys-72, Cys-105, Cys-180, Cys-184, and Cys-187 each contribute to the [4Fe-4S] cluster site. The 233-residue stretch at 166–398 folds into the Radical SAM core domain; it reads ARGRVTAFVT…LAAQRRIAGE (233 aa). One can recognise a TRAM domain in the interval 401–464; that stretch reads AGELGKVVEV…GGSSLSGTLA (64 aa).

It belongs to the methylthiotransferase family. MiaB subfamily. As to quaternary structure, monomer. The cofactor is [4Fe-4S] cluster.

Its subcellular location is the cytoplasm. The catalysed reaction is N(6)-dimethylallyladenosine(37) in tRNA + (sulfur carrier)-SH + AH2 + 2 S-adenosyl-L-methionine = 2-methylsulfanyl-N(6)-dimethylallyladenosine(37) in tRNA + (sulfur carrier)-H + 5'-deoxyadenosine + L-methionine + A + S-adenosyl-L-homocysteine + 2 H(+). Its function is as follows. Catalyzes the methylthiolation of N6-(dimethylallyl)adenosine (i(6)A), leading to the formation of 2-methylthio-N6-(dimethylallyl)adenosine (ms(2)i(6)A) at position 37 in tRNAs that read codons beginning with uridine. The chain is tRNA-2-methylthio-N(6)-dimethylallyladenosine synthase from Anaeromyxobacter sp. (strain K).